Reading from the N-terminus, the 259-residue chain is Ribosomal RNA small subunit methyltransferase J (259 aa).

S-adenosyl-L-methionine contacts are provided by residues 109–110, 125–126, 161–162, and D179; these read RD, ER, and SS.

The protein belongs to the methyltransferase superfamily. RsmJ family.

It localises to the cytoplasm. The catalysed reaction is guanosine(1516) in 16S rRNA + S-adenosyl-L-methionine = N(2)-methylguanosine(1516) in 16S rRNA + S-adenosyl-L-homocysteine + H(+). Specifically methylates the guanosine in position 1516 of 16S rRNA. The polypeptide is Ribosomal RNA small subunit methyltransferase J (Shewanella putrefaciens (strain CN-32 / ATCC BAA-453)).